The sequence spans 524 residues: Phosphoenolpyruvate carboxykinase (ATP) (524 aa).

Substrate-binding residues include arginine 52, tyrosine 188, and lysine 194. ATP contacts are provided by residues lysine 194, histidine 213, and 229-237 (GLSGTGKTT). Residues lysine 194 and histidine 213 each contribute to the Mn(2+) site. Residue aspartate 250 coordinates Mn(2+). Residues glutamate 278, arginine 314, and threonine 439 each contribute to the ATP site. Arginine 314 contacts substrate.

Belongs to the phosphoenolpyruvate carboxykinase (ATP) family. The cofactor is Mn(2+).

It localises to the cytoplasm. The catalysed reaction is oxaloacetate + ATP = phosphoenolpyruvate + ADP + CO2. The protein operates within carbohydrate biosynthesis; gluconeogenesis. Involved in the gluconeogenesis. Catalyzes the conversion of oxaloacetate (OAA) to phosphoenolpyruvate (PEP) through direct phosphoryl transfer between the nucleoside triphosphate and OAA. In Campylobacter lari (strain RM2100 / D67 / ATCC BAA-1060), this protein is Phosphoenolpyruvate carboxykinase (ATP).